Consider the following 264-residue polypeptide: Myozenin-2 (264 aa).

Omega-N-methylarginine is present on Arg53. The interval 90 to 135 is disordered; sequence GRVDGSNLEGGSQQGPSTPPNTPDPRSPPNPENIAPGYSGPLKEIP. Ser101 carries the post-translational modification Phosphoserine. Residues 106 to 120 show a composition bias toward pro residues; it reads STPPNTPDPRSPPNP. Residues Thr107 and Thr111 each carry the phosphothreonine modification. The residue at position 116 (Ser116) is a Phosphoserine.

It belongs to the myozenin family. In terms of assembly, interacts via its C-terminus with spectrin repeats 3 and 4 of ACTN2. Interacts with ACTN1, LDB3, MYOT and PPP3CA. In terms of tissue distribution, expressed specifically in heart and skeletal muscle. In skeletal muscle, localized to the soleus and plantaris muscles, which are predominantly composed of slow-twitch fibers.

Its subcellular location is the cytoplasm. The protein localises to the myofibril. It is found in the sarcomere. It localises to the z line. Its function is as follows. Myozenins may serve as intracellular binding proteins involved in linking Z line proteins such as alpha-actinin, gamma-filamin, TCAP/telethonin, LDB3/ZASP and localizing calcineurin signaling to the sarcomere. Plays an important role in the modulation of calcineurin signaling. May play a role in myofibrillogenesis. The chain is Myozenin-2 from Mus musculus (Mouse).